A 424-amino-acid polypeptide reads, in one-letter code: 3-ketoacyl-CoA thiolase B, peroxisomal (424 aa).

The transit peptide at 1–26 (MHRLQVVLGHLAGRSESSSALQAAPC) directs the protein to the peroxisome. Residues 1-26 (MHRLQVVLGHLAGRSESSSALQAAPC) form a PTS2-type peroxisomal targeting signal region. Cys123 (acyl-thioester intermediate) is an active-site residue. Lys173 and Lys234 each carry N6-acetyllysine. Arg249, Thr252, and Ser276 together coordinate CoA. Cys408 serves as the catalytic Proton donor/acceptor.

Belongs to the thiolase-like superfamily. Thiolase family. In terms of assembly, homodimer. Interacts (via PTS2-type peroxisomal targeting signal region) with PEX7; leading to its translocation into peroxisomes.

It is found in the peroxisome. It carries out the reaction an acyl-CoA + acetyl-CoA = a 3-oxoacyl-CoA + CoA. The catalysed reaction is 2 acetyl-CoA = acetoacetyl-CoA + CoA. It catalyses the reaction hexanoyl-CoA + acetyl-CoA = 3-oxooctanoyl-CoA + CoA. The enzyme catalyses tetradecanoyl-CoA + acetyl-CoA = 3-oxohexadecanoyl-CoA + CoA. It carries out the reaction 3-oxohexadecanedioyl-CoA + CoA = tetradecanedioyl-CoA + acetyl-CoA. The catalysed reaction is 3-oxo-(6Z,9Z,12Z,15Z,18Z,21Z)-tetracosahexaenoyl-CoA + CoA = (4Z,7Z,10Z,13Z,16Z,19Z)-docosahexaenoyl-CoA + acetyl-CoA. The protein operates within lipid metabolism; peroxisomal fatty acid beta-oxidation. In terms of biological role, responsible for the thiolytic cleavage of straight chain 3-keto fatty acyl-CoAs (3-oxoacyl-CoAs). Plays an important role in fatty acid peroxisomal beta-oxidation. Catalyzes the cleavage of short, medium, long, and very long straight chain 3-oxoacyl-CoAs. Medium chain straight 3-oxoacyl-CoAs are preferred substrates. This chain is 3-ketoacyl-CoA thiolase B, peroxisomal, found in Rattus norvegicus (Rat).